A 433-amino-acid polypeptide reads, in one-letter code: Methylenetetrahydrofolate--tRNA-(uracil-5-)-methyltransferase TrmFO (433 aa).

Position 8–13 (8–13) interacts with FAD; that stretch reads GAGLAG.

Belongs to the MnmG family. TrmFO subfamily. FAD serves as cofactor.

The protein resides in the cytoplasm. It catalyses the reaction uridine(54) in tRNA + (6R)-5,10-methylene-5,6,7,8-tetrahydrofolate + NADH + H(+) = 5-methyluridine(54) in tRNA + (6S)-5,6,7,8-tetrahydrofolate + NAD(+). The catalysed reaction is uridine(54) in tRNA + (6R)-5,10-methylene-5,6,7,8-tetrahydrofolate + NADPH + H(+) = 5-methyluridine(54) in tRNA + (6S)-5,6,7,8-tetrahydrofolate + NADP(+). Catalyzes the folate-dependent formation of 5-methyl-uridine at position 54 (M-5-U54) in all tRNAs. In Carboxydothermus hydrogenoformans (strain ATCC BAA-161 / DSM 6008 / Z-2901), this protein is Methylenetetrahydrofolate--tRNA-(uracil-5-)-methyltransferase TrmFO.